The chain runs to 489 residues: Phosphoglucosamine mutase (489 aa).

Ser136 serves as the catalytic Phosphoserine intermediate. Residues Ser136, Asp275, Asp277, and Asp279 each contribute to the Mg(2+) site. Phosphoserine is present on Ser136.

This sequence belongs to the phosphohexose mutase family. The cofactor is Mg(2+). Post-translationally, activated by phosphorylation.

The enzyme catalyses alpha-D-glucosamine 1-phosphate = D-glucosamine 6-phosphate. Catalyzes the conversion of glucosamine-6-phosphate to glucosamine-1-phosphate. This chain is Phosphoglucosamine mutase, found in Trichodesmium erythraeum (strain IMS101).